The sequence spans 150 residues: Large ribosomal subunit protein bL9 (150 aa).

The protein belongs to the bacterial ribosomal protein bL9 family.

Its function is as follows. Binds to the 23S rRNA. This chain is Large ribosomal subunit protein bL9, found in Saccharopolyspora erythraea (strain ATCC 11635 / DSM 40517 / JCM 4748 / NBRC 13426 / NCIMB 8594 / NRRL 2338).